The primary structure comprises 68 residues: UPF0253 protein VFMJ11_0680 (68 aa).

Belongs to the UPF0253 family.

This is UPF0253 protein VFMJ11_0680 from Aliivibrio fischeri (strain MJ11) (Vibrio fischeri).